The primary structure comprises 552 residues: DNA ligase (552 aa).

Residue glutamate 244 coordinates ATP. Lysine 246 serves as the catalytic N6-AMP-lysine intermediate. Residues arginine 251, arginine 266, glutamate 296, phenylalanine 336, arginine 408, and lysine 414 each contribute to the ATP site.

It belongs to the ATP-dependent DNA ligase family. It depends on Mg(2+) as a cofactor.

It carries out the reaction ATP + (deoxyribonucleotide)n-3'-hydroxyl + 5'-phospho-(deoxyribonucleotide)m = (deoxyribonucleotide)n+m + AMP + diphosphate.. Its function is as follows. DNA ligase that seals nicks in double-stranded DNA during DNA replication, DNA recombination and DNA repair. This is DNA ligase from Methanothrix thermoacetophila (strain DSM 6194 / JCM 14653 / NBRC 101360 / PT) (Methanosaeta thermophila).